The following is a 28-amino-acid chain: Metallothionein-like protein type 2 LSC210 (28 aa).

This sequence belongs to the metallothionein superfamily. Type 15 family.

Functionally, metallothioneins have a high content of cysteine residues that bind various heavy metals. The sequence is that of Metallothionein-like protein type 2 LSC210 (LSC210) from Brassica napus (Rape).